The following is a 128-amino-acid chain: MTMLISLPTAPSVPNYQSLERPLNFTMAAAAKVRELIQEENSADLALRVYIQGGGCSGFQYGFEFDENRADDDLVLETDGVVLLVDPLSLQYLLGAEVDYTESLTGAKFVIRNPNAKTTCGCGSSFSI.

Positions 56, 120, and 122 each coordinate iron-sulfur cluster.

Belongs to the HesB/IscA family. In terms of assembly, homodimer. It depends on iron-sulfur cluster as a cofactor.

In terms of biological role, required for insertion of 4Fe-4S clusters for at least IspG. The polypeptide is Iron-sulfur cluster insertion protein ErpA (Xylella fastidiosa (strain M12)).